The primary structure comprises 504 residues: Cytochrome P450 monooxygenase braC (504 aa).

Residues 4–24 (LYLPTIWASTLTAATIFIVAV) traverse the membrane as a helical segment. Residue cysteine 448 coordinates heme.

It belongs to the cytochrome P450 family. The cofactor is heme.

Its subcellular location is the membrane. Its pathway is secondary metabolite biosynthesis. Functionally, cytochrome P450 monooxygenase; part of the gene cluster that mediates the biosynthesis of the brasilane terpene glycosides brasilane D and E. The biosynthesis starts with the activity of the terpene cyclase braA that converts farnesyl pyrophosphate into the sesquiterpene alcohol trichobrasilenol. Subsequently, trichobrasilenol is glycosylated by the O-glycosyltransferase braB putatively using UDP-GlcNAc as sugar donor to yield brasilane A. The latter then undergoes two rounds of oxidation performed by the cytochrome P450 monooxygenase braC. In the first round braC hydroxylates C-12 forming brasilane D, which serves as substrate in the second round to establish the epoxide at the bond between C-5 and C-10 and oxidize the alcohol at C-12 to an aldehyde leading to the final product brasilane E. The polypeptide is Cytochrome P450 monooxygenase braC (Annulohypoxylon truncatum (Hypoxylon truncatum)).